The chain runs to 315 residues: Ribose-phosphate pyrophosphokinase (315 aa).

Residues 37–39 and 96–97 contribute to the ATP site; these read DGE and RQ. 2 residues coordinate Mg(2+): His131 and Asp170. Residue Lys194 is part of the active site. D-ribose 5-phosphate contacts are provided by residues Arg196, Asp220, and 224–228; that span reads DTGGT.

Belongs to the ribose-phosphate pyrophosphokinase family. Class I subfamily. As to quaternary structure, homohexamer. Mg(2+) is required as a cofactor.

It localises to the cytoplasm. The catalysed reaction is D-ribose 5-phosphate + ATP = 5-phospho-alpha-D-ribose 1-diphosphate + AMP + H(+). It participates in metabolic intermediate biosynthesis; 5-phospho-alpha-D-ribose 1-diphosphate biosynthesis; 5-phospho-alpha-D-ribose 1-diphosphate from D-ribose 5-phosphate (route I): step 1/1. Functionally, involved in the biosynthesis of the central metabolite phospho-alpha-D-ribosyl-1-pyrophosphate (PRPP) via the transfer of pyrophosphoryl group from ATP to 1-hydroxyl of ribose-5-phosphate (Rib-5-P). The chain is Ribose-phosphate pyrophosphokinase from Escherichia coli O6:H1 (strain CFT073 / ATCC 700928 / UPEC).